A 343-amino-acid polypeptide reads, in one-letter code: S-adenosylmethionine:tRNA ribosyltransferase-isomerase (343 aa).

It belongs to the QueA family. As to quaternary structure, monomer.

Its subcellular location is the cytoplasm. The enzyme catalyses 7-aminomethyl-7-carbaguanosine(34) in tRNA + S-adenosyl-L-methionine = epoxyqueuosine(34) in tRNA + adenine + L-methionine + 2 H(+). It participates in tRNA modification; tRNA-queuosine biosynthesis. Its function is as follows. Transfers and isomerizes the ribose moiety from AdoMet to the 7-aminomethyl group of 7-deazaguanine (preQ1-tRNA) to give epoxyqueuosine (oQ-tRNA). In Pseudoalteromonas translucida (strain TAC 125), this protein is S-adenosylmethionine:tRNA ribosyltransferase-isomerase.